The sequence spans 470 residues: 5-hydroxytryptamine receptor 2A (470 aa).

At 1-80 the chain is on the extracellular side; that stretch reads MDILCEENTS…LQEKNWSALL (80 aa). An N-linked (GlcNAc...) asparagine glycan is attached at Asn-38. The chain crosses the membrane as a helical span at residues 81–97; it reads TAVVIILTIAGNILVIM. At 98–111 the chain is on the cytoplasmic side; it reads AVSLEKKLQNATNY. The chain crosses the membrane as a helical span at residues 112–137; that stretch reads FLMSLAIADMLLGFLVMPVSTLTILY. Residues 138–146 lie on the Extracellular side of the membrane; that stretch reads GYRWPLPSK. The helical transmembrane segment at 147-171 threads the bilayer; the sequence is LCAVWIYLDVLFSTASIMHLCAISL. The cysteines at positions 148 and 227 are disulfide-linked. Asp-155 lines the serotonin pocket. The DRY motif; important for ligand-induced conformation changes motif lies at 172 to 174; sequence DRY. Over 172–191 the chain is Cytoplasmic; that stretch reads DRYVAIQNPIHHSRFNSRTK. A helical transmembrane segment spans residues 192-215; sequence AFLKIIAVWTISVGISMPIPVFGL. The Extracellular portion of the chain corresponds to 216-232; it reads QDDSKVFKEGSCLLADE. The helical transmembrane segment at 233–258 threads the bilayer; that stretch reads NFVLIGSFVAFFIPLTIMVITYFLTI. Residues 259–321 are Cytoplasmic-facing; that stretch reads KSLQKEATLC…QSISNEQKAC (63 aa). A Phosphoserine modification is found at Ser-280. The chain crosses the membrane as a helical span at residues 322–347; the sequence is KVLGIVFFLFVVMWCPFFITNIMAVI. Asn-342 contributes to the serotonin binding site. Cys-348 and Cys-352 are joined by a disulfide. Residues 348 to 355 are Extracellular-facing; sequence CKESCNRD. The chain crosses the membrane as a helical span at residues 356 to 381; it reads VIEALLNVFVWIGYLSSAVNPLVYTL. The NPxxY motif; important for ligand-induced conformation changes and signaling motif lies at 375-379; that stretch reads NPLVY. Residues 382–470 lie on the Cytoplasmic side of the membrane; that stretch reads FNKTYRSAFS…NTVNEKVSCV (89 aa). Residues 424–470 are disordered; it reads QMGPKKNSKKDDKTTDNDCTMVALGKEHPEDAPADSSNTVNEKVSCV. A compositionally biased stretch (polar residues) spans 458 to 470; sequence DSSNTVNEKVSCV. The PDZ-binding signature appears at 468–470; the sequence is SCV.

It belongs to the G-protein coupled receptor 1 family. As to quaternary structure, interacts (via C-terminus) with MPDZ and PATJ. May interact (via C-terminus) with MPP3, PRDX6, DLG4, DLG1, CASK, APBA1 and MAGI2. Interacts with GRM2 and DRD2; this may affect signaling.

It is found in the cell membrane. Its subcellular location is the cell projection. The protein resides in the dendrite. The protein localises to the axon. It localises to the cytoplasmic vesicle. It is found in the membrane. Its subcellular location is the caveola. The protein resides in the presynapse. Its activity is regulated as follows. G-protein coupled receptor activity is regulated by lipids: oleamide increases HTR2A-mediated activity. Functionally, G-protein coupled receptor for 5-hydroxytryptamine (serotonin). Also functions as a receptor for various drugs and psychoactive substances, including mescaline, psilocybin, 1-(2,5-dimethoxy-4-iodophenyl)-2-aminopropane (DOI) and lysergic acid diethylamide (LSD). Ligand binding causes a conformation change that triggers signaling via guanine nucleotide-binding proteins (G proteins) and modulates the activity of downstream effectors. HTR2A is coupled to G(q)/G(11) G alpha proteins and activates phospholipase C-beta, releasing diacylglycerol (DAG) and inositol 1,4,5-trisphosphate (IP3) second messengers that modulate the activity of phosphatidylinositol 3-kinase and promote the release of Ca(2+) ions from intracellular stores, respectively. Beta-arrestin family members inhibit signaling via G proteins and mediate activation of alternative signaling pathways. Affects neural activity, perception, cognition and mood. Plays a role in the regulation of behavior, including responses to anxiogenic situations and psychoactive substances. Plays a role in intestinal smooth muscle contraction, and may play a role in arterial vasoconstriction. This chain is 5-hydroxytryptamine receptor 2A (HTR2A), found in Bos taurus (Bovine).